The following is a 404-amino-acid chain: Probable tRNA sulfurtransferase (404 aa).

The THUMP domain occupies 61-166 (EAVSERLKDV…SGYSYIMCDE (106 aa)). ATP-binding positions include 184–185 (LL), 209–210 (HF), arginine 266, glycine 288, and glutamine 297.

It belongs to the ThiI family.

The protein localises to the cytoplasm. It carries out the reaction [ThiI sulfur-carrier protein]-S-sulfanyl-L-cysteine + a uridine in tRNA + 2 reduced [2Fe-2S]-[ferredoxin] + ATP + H(+) = [ThiI sulfur-carrier protein]-L-cysteine + a 4-thiouridine in tRNA + 2 oxidized [2Fe-2S]-[ferredoxin] + AMP + diphosphate. The enzyme catalyses [ThiS sulfur-carrier protein]-C-terminal Gly-Gly-AMP + S-sulfanyl-L-cysteinyl-[cysteine desulfurase] + AH2 = [ThiS sulfur-carrier protein]-C-terminal-Gly-aminoethanethioate + L-cysteinyl-[cysteine desulfurase] + A + AMP + 2 H(+). The protein operates within cofactor biosynthesis; thiamine diphosphate biosynthesis. Catalyzes the ATP-dependent transfer of a sulfur to tRNA to produce 4-thiouridine in position 8 of tRNAs, which functions as a near-UV photosensor. Also catalyzes the transfer of sulfur to the sulfur carrier protein ThiS, forming ThiS-thiocarboxylate. This is a step in the synthesis of thiazole, in the thiamine biosynthesis pathway. The sulfur is donated as persulfide by IscS. In Bacillus cereus (strain ATCC 10987 / NRS 248), this protein is Probable tRNA sulfurtransferase.